The primary structure comprises 194 residues: ATP synthase subunit delta (194 aa).

The protein belongs to the ATPase delta chain family. In terms of assembly, F-type ATPases have 2 components, F(1) - the catalytic core - and F(0) - the membrane proton channel. F(1) has five subunits: alpha(3), beta(3), gamma(1), delta(1), epsilon(1). F(0) has three main subunits: a(1), b(2) and c(10-14). The alpha and beta chains form an alternating ring which encloses part of the gamma chain. F(1) is attached to F(0) by a central stalk formed by the gamma and epsilon chains, while a peripheral stalk is formed by the delta and b chains.

Its subcellular location is the cell inner membrane. Its function is as follows. F(1)F(0) ATP synthase produces ATP from ADP in the presence of a proton or sodium gradient. F-type ATPases consist of two structural domains, F(1) containing the extramembraneous catalytic core and F(0) containing the membrane proton channel, linked together by a central stalk and a peripheral stalk. During catalysis, ATP synthesis in the catalytic domain of F(1) is coupled via a rotary mechanism of the central stalk subunits to proton translocation. In terms of biological role, this protein is part of the stalk that links CF(0) to CF(1). It either transmits conformational changes from CF(0) to CF(1) or is implicated in proton conduction. The sequence is that of ATP synthase subunit delta from Bartonella bacilliformis (strain ATCC 35685 / KC583 / Herrer 020/F12,63).